The primary structure comprises 700 residues: Dymeclin (700 aa).

Gly2 carries the N-myristoyl glycine lipid modification. Ser347 carries the phosphoserine modification.

This sequence belongs to the dymeclin family.

The sequence is that of Dymeclin from Drosophila pseudoobscura pseudoobscura (Fruit fly).